We begin with the raw amino-acid sequence, 238 residues long: 1-(5-phosphoribosyl)-5-[(5-phosphoribosylamino)methylideneamino] imidazole-4-carboxamide isomerase (238 aa).

Asp-8 (proton acceptor) is an active-site residue. Asp-129 functions as the Proton donor in the catalytic mechanism.

The protein belongs to the HisA/HisF family.

It localises to the cytoplasm. The enzyme catalyses 1-(5-phospho-beta-D-ribosyl)-5-[(5-phospho-beta-D-ribosylamino)methylideneamino]imidazole-4-carboxamide = 5-[(5-phospho-1-deoxy-D-ribulos-1-ylimino)methylamino]-1-(5-phospho-beta-D-ribosyl)imidazole-4-carboxamide. Its pathway is amino-acid biosynthesis; L-histidine biosynthesis; L-histidine from 5-phospho-alpha-D-ribose 1-diphosphate: step 4/9. The sequence is that of 1-(5-phosphoribosyl)-5-[(5-phosphoribosylamino)methylideneamino] imidazole-4-carboxamide isomerase from Clostridium novyi (strain NT).